The primary structure comprises 423 residues: Serine hydroxymethyltransferase (423 aa).

(6S)-5,6,7,8-tetrahydrofolate contacts are provided by residues leucine 120 and glycine 124–leucine 126. Lysine 229 is modified (N6-(pyridoxal phosphate)lysine). Residue serine 353–phenylalanine 355 participates in (6S)-5,6,7,8-tetrahydrofolate binding.

Belongs to the SHMT family. In terms of assembly, homodimer. It depends on pyridoxal 5'-phosphate as a cofactor.

Its subcellular location is the cytoplasm. The enzyme catalyses (6R)-5,10-methylene-5,6,7,8-tetrahydrofolate + glycine + H2O = (6S)-5,6,7,8-tetrahydrofolate + L-serine. The protein operates within one-carbon metabolism; tetrahydrofolate interconversion. It functions in the pathway amino-acid biosynthesis; glycine biosynthesis; glycine from L-serine: step 1/1. Catalyzes the reversible interconversion of serine and glycine with tetrahydrofolate (THF) serving as the one-carbon carrier. This reaction serves as the major source of one-carbon groups required for the biosynthesis of purines, thymidylate, methionine, and other important biomolecules. Also exhibits THF-independent aldolase activity toward beta-hydroxyamino acids, producing glycine and aldehydes, via a retro-aldol mechanism. This is Serine hydroxymethyltransferase from Synechococcus sp. (strain RCC307).